Here is a 908-residue protein sequence, read N- to C-terminus: Probable RNA-directed DNA polymerase from transposon X-element (908 aa).

Positions 481-752 (AIVRLQYFPY…NAAKYLGVLL (272 aa)) constitute a Reverse transcriptase domain. Residues 883 to 908 (RPPRRLNRRQPRDLITRSPLTRVRRS) are disordered.

The cofactor is Mg(2+). Mn(2+) is required as a cofactor.

The catalysed reaction is DNA(n) + a 2'-deoxyribonucleoside 5'-triphosphate = DNA(n+1) + diphosphate. The chain is Probable RNA-directed DNA polymerase from transposon X-element (X-element\ORF2) from Drosophila melanogaster (Fruit fly).